The chain runs to 363 residues: UDP-N-acetylglucosamine--N-acetylmuramyl-(pentapeptide) pyrophosphoryl-undecaprenol N-acetylglucosamine transferase (363 aa).

Residues 14 to 16 (TGG), Arg-171, Ser-200, and Gln-290 contribute to the UDP-N-acetyl-alpha-D-glucosamine site.

It belongs to the glycosyltransferase 28 family. MurG subfamily.

The protein resides in the cell inner membrane. It carries out the reaction di-trans,octa-cis-undecaprenyl diphospho-N-acetyl-alpha-D-muramoyl-L-alanyl-D-glutamyl-meso-2,6-diaminopimeloyl-D-alanyl-D-alanine + UDP-N-acetyl-alpha-D-glucosamine = di-trans,octa-cis-undecaprenyl diphospho-[N-acetyl-alpha-D-glucosaminyl-(1-&gt;4)]-N-acetyl-alpha-D-muramoyl-L-alanyl-D-glutamyl-meso-2,6-diaminopimeloyl-D-alanyl-D-alanine + UDP + H(+). The protein operates within cell wall biogenesis; peptidoglycan biosynthesis. Its function is as follows. Cell wall formation. Catalyzes the transfer of a GlcNAc subunit on undecaprenyl-pyrophosphoryl-MurNAc-pentapeptide (lipid intermediate I) to form undecaprenyl-pyrophosphoryl-MurNAc-(pentapeptide)GlcNAc (lipid intermediate II). This Borrelia garinii subsp. bavariensis (strain ATCC BAA-2496 / DSM 23469 / PBi) (Borreliella bavariensis) protein is UDP-N-acetylglucosamine--N-acetylmuramyl-(pentapeptide) pyrophosphoryl-undecaprenol N-acetylglucosamine transferase.